The sequence spans 125 residues: Large-conductance mechanosensitive channel (125 aa).

A run of 2 helical transmembrane segments spans residues 15–35 (MDLA…NSLV) and 67–87 (GSFL…FFLI).

Belongs to the MscL family. As to quaternary structure, homopentamer.

The protein localises to the cell membrane. Its function is as follows. Channel that opens in response to stretch forces in the membrane lipid bilayer. May participate in the regulation of osmotic pressure changes within the cell. The chain is Large-conductance mechanosensitive channel from Lactobacillus gasseri (strain ATCC 33323 / DSM 20243 / BCRC 14619 / CIP 102991 / JCM 1131 / KCTC 3163 / NCIMB 11718 / NCTC 13722 / AM63).